A 306-amino-acid polypeptide reads, in one-letter code: MRKKTVQIMISHSLMIGLWASAFPGIRAGLEGYTPEHLALFRLLIGSMALLLFAVLTQMRLPDLKDIPAIFLLGFLGFAFYHILLNIGEKTVSAGVASLLVTTAPIFSAMLSRLFYKEHFGFTKWLGSMISLLGVLLIAFGAGDFTYSMSGILVILLAAFSESIYFVFQARYIKKYGFIPFVTFTIWGGTIPMLVFLPGLGEEMMNASISATLSIVYLGLLPTVIPYFALAYVTSFVGASEATLSLYVTPALALIISWLWIGEIPTLLSLLGGVVTVGGVCFTYLKVNKMNKIFITHFSAKRVKKL.

Helical transmembrane passes span 6-26 (VQIM…FPGI), 37-57 (HLAL…AVLT), 67-87 (IPAI…LLNI), 91-111 (TVSA…SAML), 125-145 (WLGS…AGDF), 148-168 (SMSG…YFVF), 177-197 (GFIP…LVFL), 213-233 (LSIV…LAYV), and 251-271 (ALAL…LSLL). EamA domains are found at residues 17 to 140 (GLWA…LIAF) and 160 to 285 (FSES…FTYL).

This sequence belongs to the EamA transporter family.

The protein localises to the cell membrane. This is an uncharacterized protein from Bacillus subtilis (strain 168).